A 96-amino-acid chain; its full sequence is Large ribosomal subunit protein bL28 (96 aa).

Belongs to the bacterial ribosomal protein bL28 family.

In Agrobacterium fabrum (strain C58 / ATCC 33970) (Agrobacterium tumefaciens (strain C58)), this protein is Large ribosomal subunit protein bL28.